Here is a 66-residue protein sequence, read N- to C-terminus: DNA-directed RNA polymerase subunit omega (66 aa).

It belongs to the RNA polymerase subunit omega family. As to quaternary structure, the RNAP catalytic core consists of 2 alpha, 1 beta, 1 beta' and 1 omega subunit. When a sigma factor is associated with the core the holoenzyme is formed, which can initiate transcription.

It carries out the reaction RNA(n) + a ribonucleoside 5'-triphosphate = RNA(n+1) + diphosphate. Its function is as follows. Promotes RNA polymerase assembly. Latches the N- and C-terminal regions of the beta' subunit thereby facilitating its interaction with the beta and alpha subunits. The sequence is that of DNA-directed RNA polymerase subunit omega from Clostridium botulinum (strain Alaska E43 / Type E3).